The primary structure comprises 106 residues: Large ribosomal subunit protein eL42 (106 aa).

Residues 37 to 56 form a disordered region; it reads SQGKRRYDRKQSGYGGQTKP.

This sequence belongs to the eukaryotic ribosomal protein eL42 family.

In Pichia kudriavzevii (Yeast), this protein is Large ribosomal subunit protein eL42 (RPL44).